A 264-amino-acid polypeptide reads, in one-letter code: Undecaprenyl-diphosphatase (264 aa).

Transmembrane regions (helical) follow at residues 1 to 21 (MEIS…FLPI), 39 to 59 (QGLA…LFYF), 83 to 103 (SLLV…GLLF), 113 to 133 (SGVV…FADL), 143 to 163 (MTIK…IPGV), 184 to 204 (ANFS…LESI), 220 to 240 (LGVI…MGII), and 243 to 263 (IRML…LYLF).

Belongs to the UppP family.

The protein localises to the cell inner membrane. The catalysed reaction is di-trans,octa-cis-undecaprenyl diphosphate + H2O = di-trans,octa-cis-undecaprenyl phosphate + phosphate + H(+). Catalyzes the dephosphorylation of undecaprenyl diphosphate (UPP). Confers resistance to bacitracin. The protein is Undecaprenyl-diphosphatase of Campylobacter concisus (strain 13826).